A 165-amino-acid chain; its full sequence is Inorganic pyrophosphatase (165 aa).

Substrate contacts are provided by Lys21, Arg35, and Tyr47. Mg(2+)-binding residues include Asp57, Asp62, and Asp94. Tyr131 lines the substrate pocket.

The protein belongs to the PPase family. Homohexamer. Mg(2+) is required as a cofactor.

The protein localises to the cytoplasm. It catalyses the reaction diphosphate + H2O = 2 phosphate + H(+). Functionally, catalyzes the hydrolysis of inorganic pyrophosphate (PPi) forming two phosphate ions. This is Inorganic pyrophosphatase from Geobacillus stearothermophilus (Bacillus stearothermophilus).